The sequence spans 73 residues: MELFIPCPERLKKMMLQEELRKELFILRCLYHPTIQIMLPTLGTLGTKKRKEKYALSLFEPILNCVGSAKISG.

This is an uncharacterized protein from Saccharomyces cerevisiae (strain ATCC 204508 / S288c) (Baker's yeast).